Consider the following 347-residue polypeptide: Methylthioribose-1-phosphate isomerase (347 aa).

Residues 45–47 (RGA), arginine 88, and glutamine 197 each bind substrate. The active-site Proton donor is aspartate 238. Position 248 to 249 (248 to 249 (NK)) interacts with substrate.

This sequence belongs to the eIF-2B alpha/beta/delta subunits family. MtnA subfamily.

It catalyses the reaction 5-(methylsulfanyl)-alpha-D-ribose 1-phosphate = 5-(methylsulfanyl)-D-ribulose 1-phosphate. It functions in the pathway amino-acid biosynthesis; L-methionine biosynthesis via salvage pathway; L-methionine from S-methyl-5-thio-alpha-D-ribose 1-phosphate: step 1/6. Catalyzes the interconversion of methylthioribose-1-phosphate (MTR-1-P) into methylthioribulose-1-phosphate (MTRu-1-P). This chain is Methylthioribose-1-phosphate isomerase, found in Nostoc sp. (strain PCC 7120 / SAG 25.82 / UTEX 2576).